Here is a 597-residue protein sequence, read N- to C-terminus: Fructan 1-exohydrolase (597 aa).

Positions 1-15 are cleaved as a signal peptide; the sequence is MAQAWAFLLPVLVFG. The active site involves Asp-76. N-linked (GlcNAc...) asparagine glycosylation is found at Asn-169, Asn-237, and Asn-249. An intrachain disulfide couples Cys-447 to Cys-493. Asn-568 is a glycosylation site (N-linked (GlcNAc...) asparagine).

It belongs to the glycosyl hydrolase 32 family.

It carries out the reaction Hydrolysis of terminal, non-reducing (2-&gt;1)-linked beta-D-fructofuranose residues in fructans.. Inhibited by sucrose. Hydrolyzes inulin-type beta-(2,1)-fructans. May play a role as a beta-(2,1)-trimmer during graminan biosynthesis. This chain is Fructan 1-exohydrolase, found in Triticum urartu (Red wild einkorn).